Consider the following 243-residue polypeptide: 7-cyano-7-deazaguanine synthase (243 aa).

Position 18–28 (18–28) interacts with ATP; that stretch reads FSGGQDSATCL. The Zn(2+) site is built by C206, C221, C224, and C227.

The protein belongs to the QueC family. Zn(2+) serves as cofactor.

It catalyses the reaction 7-carboxy-7-deazaguanine + NH4(+) + ATP = 7-cyano-7-deazaguanine + ADP + phosphate + H2O + H(+). The protein operates within purine metabolism; 7-cyano-7-deazaguanine biosynthesis. Functionally, catalyzes the ATP-dependent conversion of 7-carboxy-7-deazaguanine (CDG) to 7-cyano-7-deazaguanine (preQ(0)). The polypeptide is 7-cyano-7-deazaguanine synthase (Maricaulis maris (strain MCS10) (Caulobacter maris)).